Reading from the N-terminus, the 1673-residue chain is Protein TIC 214 (1673 aa).

Transmembrane regions (helical) follow at residues 18 to 38, 67 to 87, 90 to 110, 127 to 147, 175 to 195, and 218 to 238; these read IINS…FSIG, FITG…HLAL, PHTI…CNTH, LSIQ…HFIL, VGWI…VVWI, and SMSI…YYLG.

This sequence belongs to the TIC214 family. Part of the Tic complex.

The protein localises to the plastid. It localises to the chloroplast inner membrane. Functionally, involved in protein precursor import into chloroplasts. May be part of an intermediate translocation complex acting as a protein-conducting channel at the inner envelope. The protein is Protein TIC 214 of Lactuca sativa (Garden lettuce).